A 528-amino-acid chain; its full sequence is MKYALIRKLLFVLRTYMMNVRAILVLDFGSQYSQLIARRIREIGVYTKVIPYYTPLKEIKNMNIAGIILSGGPASVYAKDAPTLNMEIFNLKIPVLGICYGMQLIVKLFGGLVSKDYKQEYGSSEIFLKNEKSLLFSELPNKFQIIMSHGDSIEKIPNNFKQLAFTKNCIASISNEDQKIYGLQFHPEVTHSEFGDQILKNFVFKICQSQTNWSLESNVETIVEKIKLKVGSKKVILGLSGGTDSLVCALLIKKAIKENLICVFVNTGLLRKNEDKKILELKHQYDLNIKYIDASEKFLNYLKNISDPEEKRKIIGKEFVNVFEKITLEDQNIEYLAQGTIYSDVIESKSKNNASSKIKSHHNVGGLPDKMRLKLLEPLNEFFKDEIIQIGINLGIKKEALYRHPFPGPGLAIRIIGEVTQEKINILQEAENILTEELFTNDLYYEIRQAFVVLLPVKSVGVMGDQRTYEYTAVIRCVNTQDFMTAEWTELPYNFLRKVSSRIINEVRGINRVCYDISSKPPSTIEWE.

The Glutamine amidotransferase type-1 domain maps to alanine 22 to asparagine 212. Cysteine 99 (nucleophile) is an active-site residue. Catalysis depends on residues histidine 186 and glutamate 188. One can recognise a GMPS ATP-PPase domain in the interval tryptophan 213 to arginine 403. Serine 240–leucine 246 contacts ATP.

Homodimer.

It carries out the reaction XMP + L-glutamine + ATP + H2O = GMP + L-glutamate + AMP + diphosphate + 2 H(+). It functions in the pathway purine metabolism; GMP biosynthesis; GMP from XMP (L-Gln route): step 1/1. Functionally, catalyzes the synthesis of GMP from XMP. The sequence is that of GMP synthase [glutamine-hydrolyzing] from Borrelia garinii subsp. bavariensis (strain ATCC BAA-2496 / DSM 23469 / PBi) (Borreliella bavariensis).